Consider the following 563-residue polypeptide: MRLALWMYQGTAHHGVGRIANSMRGVHAVFHAPQGDDYVNPIFTMLERTPDFPRMTTSIVSGRDLAQGTVRLPETLRQVDAQVQPDLIIVCASCSTILLQEDLERMAHSAGTRAETLVYDANPYRMQEVRSADGLFTLLTQRFARSQPPTAVPSVNILGPASLGFHNRSDLICLRRMLATLGVQVNVVAPLGASIRDLERLPAAWATIAPYRELGQNAARWLDEQFGVPALTDSPIGVQPTLRWLRRLVETLNDAGERLQRLTNPLRLPPLTAFSLDGMSAPSSVPWFARTADMESYSMKRAFVFGDATHTVGMVKFLRDELGMQIVGAGTYLEHEADWVRGELQDYLPADETGSIDTSFLVTEVFQDVARRIADLTPELVCGTQMERHACRKLDLPCMVIAPPTHIENHLLSYRPVLGFDGADVLADTVYTTATLGMEKHLIDMFGDAGLEYEEPRTERREAEFGNQKVETGEPGTGAPVIAHADSNGGVAGSSSTLAAQTVTASPRLVTPVWAPEAQAMLKKVPFFVRGRVQKNVERYAAQHGYATITAEILVEAKEALGG.

[4Fe-4S] cluster is bound at residue D36. D293 serves as the catalytic Proton donor. Residue 437–438 (GM) coordinates substrate. The segment at 459–478 (ERREAEFGNQKVETGEPGTG) is disordered.

The protein belongs to the ChlB/BchB/BchZ family. As to quaternary structure, protochlorophyllide reductase is composed of three subunits; BchL, BchN and BchB. Forms a heterotetramer of two BchB and two BchN subunits. It depends on [4Fe-4S] cluster as a cofactor.

It catalyses the reaction chlorophyllide a + oxidized 2[4Fe-4S]-[ferredoxin] + 2 ADP + 2 phosphate = protochlorophyllide a + reduced 2[4Fe-4S]-[ferredoxin] + 2 ATP + 2 H2O. It functions in the pathway porphyrin-containing compound metabolism; bacteriochlorophyll biosynthesis (light-independent). Component of the dark-operative protochlorophyllide reductase (DPOR) that uses Mg-ATP and reduced ferredoxin to reduce ring D of protochlorophyllide (Pchlide) to form chlorophyllide a (Chlide). This reaction is light-independent. The NB-protein (BchN-BchB) is the catalytic component of the complex. The polypeptide is Light-independent protochlorophyllide reductase subunit B (Roseiflexus castenholzii (strain DSM 13941 / HLO8)).